Consider the following 141-residue polypeptide: 3-hydroxyacyl-[acyl-carrier-protein] dehydratase FabZ (141 aa).

His-49 is an active-site residue.

This sequence belongs to the thioester dehydratase family. FabZ subfamily.

It localises to the cytoplasm. It catalyses the reaction a (3R)-hydroxyacyl-[ACP] = a (2E)-enoyl-[ACP] + H2O. Functionally, involved in unsaturated fatty acids biosynthesis. Catalyzes the dehydration of short chain beta-hydroxyacyl-ACPs and long chain saturated and unsaturated beta-hydroxyacyl-ACPs. The polypeptide is 3-hydroxyacyl-[acyl-carrier-protein] dehydratase FabZ (Fusobacterium nucleatum subsp. nucleatum (strain ATCC 25586 / DSM 15643 / BCRC 10681 / CIP 101130 / JCM 8532 / KCTC 2640 / LMG 13131 / VPI 4355)).